Reading from the N-terminus, the 735-residue chain is Serine/threonine-protein kinase BRSK2 (735 aa).

One can recognise a Protein kinase domain in the interval 20–271; sequence YRLEKTLGKG…LEHIQKHIWY (252 aa). ATP contacts are provided by residues 26–34 and K49; that span reads LGKGQTGLV. The active-site Proton acceptor is D142. T175 carries the post-translational modification Phosphothreonine; by LKB1. T261 bears the Phosphothreonine; by PKA mark. Residue S295 is modified to Phosphoserine. In terms of domain architecture, UBA spans 298-340; the sequence is DIDPDVLDSMHSLGCFRDRNKLLQDLLSEEENQEKMIYFLLLD. Residues 346–367 are compositionally biased toward basic and acidic residues; the sequence is PSHEDEDLPPRNEIDPPRKRVD. Disordered regions lie at residues 346–476, 493–514, and 682–735; these read PSHE…GVPW, FHRR…PESS, and KNGQ…REQP. A phosphoserine mark is found at S368, S383, S394, S413, A417, S424, and S428. The segment covering 411 to 429 has biased composition (low complexity); it reads SRSISGASSGLSTSPLSSP. Pro residues predominate over residues 432–446; the sequence is TPHPSPRGSPLPTPK. Residue S456 is modified to Phosphoserine. Residues T460, T464, and T510 each carry the phosphothreonine modification. 2 positions are modified to phosphoserine: S513 and S514.

This sequence belongs to the protein kinase superfamily. CAMK Ser/Thr protein kinase family. SNF1 subfamily. In terms of assembly, interacts with FZR1, a regulatory subunit of the APC ubiquitin ligase complex. Interacts with COPS5. Interacts with PAK1. The cofactor is Mg(2+). May be phosphorylated at Thr-261 by PKA. Phosphorylated at Thr-175 by STK11/LKB1 in complex with STE20-related adapter-alpha (STRADA) pseudo kinase and CAB39. Not phosphorylated at Thr-175 by CaMKK2. In contrast, it is phosphorylated and activated by CaMKK1. May be inactivated via dephosphorylation of Thr-175 by PP2C. In terms of processing, polyubiquitinated by the APC complex in conjunction with FZR1, leading to its proteasomal degradation. Targeted for proteasomal degradation by interaction with COPS5. BRSK2 levels change during the cell cycle. BRSK2 levels are low at the G1/S boundary and gradually increase as cells progress into G2 phase. BRSK2 levels decrease rapidly at the end of mitosis.

Its subcellular location is the cytoplasm. The protein resides in the cytoskeleton. It is found in the microtubule organizing center. The protein localises to the centrosome. It localises to the perinuclear region. Its subcellular location is the endoplasmic reticulum. The enzyme catalyses L-seryl-[protein] + ATP = O-phospho-L-seryl-[protein] + ADP + H(+). It carries out the reaction L-threonyl-[protein] + ATP = O-phospho-L-threonyl-[protein] + ADP + H(+). The catalysed reaction is L-seryl-[tau protein] + ATP = O-phospho-L-seryl-[tau protein] + ADP + H(+). It catalyses the reaction L-threonyl-[tau protein] + ATP = O-phospho-L-threonyl-[tau protein] + ADP + H(+). With respect to regulation, activated by phosphorylation on Thr-175 by STK11/LKB1. Its function is as follows. Serine/threonine-protein kinase that plays a key role in polarization of neurons and axonogenesis, cell cycle progress and insulin secretion. Phosphorylates CDK16, CDC25C, MAPT/TAU, PAK1 and WEE1. Following phosphorylation and activation by STK11/LKB1, acts as a key regulator of polarization of cortical neurons, probably by mediating phosphorylation of microtubule-associated proteins such as MAPT/TAU at 'Thr-523' and 'Ser-573'. Also regulates neuron polarization by mediating phosphorylation of WEE1 at 'Ser-642' in post-mitotic neurons, leading to down-regulate WEE1 activity in polarized neurons. Plays a role in the regulation of the mitotic cell cycle progress and the onset of mitosis. Plays a role in the regulation of insulin secretion in response to elevated glucose levels, probably via phosphorylation of CDK16 and PAK1. While BRSK2 phosphorylated at Thr-175 can inhibit insulin secretion, BRSK2 phosphorylated at Thr-261 can promote insulin secretion. Regulates reorganization of the actin cytoskeleton. May play a role in the apoptotic response triggered by endoplasmic reticulum (ER) stress. This chain is Serine/threonine-protein kinase BRSK2 (Brsk2), found in Rattus norvegicus (Rat).